The chain runs to 533 residues: Protein trichome birefringence-like 18 (533 aa).

Residues 21–41 (VSTVAIAIGGLASFFVFGLLL) traverse the membrane as a helical; Signal-anchor for type II membrane protein segment. Residues 93–171 (SDSSSGLPVV…PDDVSETASA (79 aa)) form a disordered region. Residues 113 to 154 (SSDRKLETPLTQEKEDLVSSDITEKTDVQSGERETNVSKAED) show a composition bias toward basic and acidic residues. Positions 248-250 (GDS) match the GDS motif motif. Residues 475 to 502 (HDGHPGPFRSPDPNKITKRGPDGRPPPQ) form a disordered region. A DCXHWCLPGXXDXWN motif motif is present at residues 503–517 (DCLHWCMPGPVDTWN).

It belongs to the PC-esterase family. TBL subfamily.

The protein localises to the membrane. Functionally, may act as a bridging protein that binds pectin and other cell wall polysaccharides. Probably involved in maintaining esterification of pectins. May be involved in the specific O-acetylation of cell wall polymers. This chain is Protein trichome birefringence-like 18 (TBL18), found in Arabidopsis thaliana (Mouse-ear cress).